The primary structure comprises 185 residues: Transcription termination/antitermination protein NusG (185 aa).

A KOW domain is found at 134 to 162; sequence PGQMVRVIDGPFNDFDGLVEEVNYEKNRL.

It belongs to the NusG family.

Participates in transcription elongation, termination and antitermination. This chain is Transcription termination/antitermination protein NusG, found in Xylella fastidiosa (strain 9a5c).